A 2260-amino-acid polypeptide reads, in one-letter code: Protein Ycf2 (2260 aa).

Residue 1614–1621 (GSIGTGRS) coordinates ATP.

Belongs to the Ycf2 family.

It localises to the plastid. Its subcellular location is the chloroplast stroma. Probable ATPase of unknown function. Its presence in a non-photosynthetic plant (Epifagus virginiana) and experiments in tobacco indicate that it has an essential function which is probably not related to photosynthesis. This Dioscorea elephantipes (Elephant's foot yam) protein is Protein Ycf2.